We begin with the raw amino-acid sequence, 207 residues long: Negative modulator of initiation of replication (207 aa).

Residues 43 to 54 are compositionally biased toward polar residues; it reads ATPITSSVTPSA. The disordered stretch occupies residues 43–63; it reads ATPITSSVTPSAPRQEAVNDE.

This sequence belongs to the SeqA family. Homodimer. Polymerizes to form helical filaments.

The protein resides in the cytoplasm. Functionally, negative regulator of replication initiation, which contributes to regulation of DNA replication and ensures that replication initiation occurs exactly once per chromosome per cell cycle. Binds to pairs of hemimethylated GATC sequences in the oriC region, thus preventing assembly of replication proteins and re-initiation at newly replicated origins. Repression is relieved when the region becomes fully methylated. The chain is Negative modulator of initiation of replication from Psychromonas ingrahamii (strain DSM 17664 / CCUG 51855 / 37).